The chain runs to 448 residues: Tubulin alpha chain (448 aa).

Glutamine 12, glutamate 73, serine 142, glycine 146, threonine 147, threonine 181, asparagine 208, and asparagine 230 together coordinate GTP. Mg(2+) is bound at residue glutamate 73. The active site involves glutamate 256.

It belongs to the tubulin family. Dimer of alpha and beta chains. A typical microtubule is a hollow water-filled tube with an outer diameter of 25 nm and an inner diameter of 15 nM. Alpha-beta heterodimers associate head-to-tail to form protofilaments running lengthwise along the microtubule wall with the beta-tubulin subunit facing the microtubule plus end conferring a structural polarity. Microtubules usually have 13 protofilaments but different protofilament numbers can be found in some organisms and specialized cells. The cofactor is Mg(2+).

The protein localises to the cytoplasm. The protein resides in the cytoskeleton. It carries out the reaction GTP + H2O = GDP + phosphate + H(+). Its function is as follows. Tubulin is the major constituent of microtubules, a cylinder consisting of laterally associated linear protofilaments composed of alpha- and beta-tubulin heterodimers. Microtubules grow by the addition of GTP-tubulin dimers to the microtubule end, where a stabilizing cap forms. Below the cap, tubulin dimers are in GDP-bound state, owing to GTPase activity of alpha-tubulin. This is Tubulin alpha chain (TUB1) from Eremothecium gossypii (strain ATCC 10895 / CBS 109.51 / FGSC 9923 / NRRL Y-1056) (Yeast).